The primary structure comprises 591 residues: Glucose-6-phosphate isomerase (591 aa).

Glutamate 380 serves as the catalytic Proton donor. Active-site residues include histidine 411 and lysine 540.

Belongs to the GPI family. As to quaternary structure, homodimer.

It is found in the cytoplasm. The enzyme catalyses alpha-D-glucose 6-phosphate = beta-D-fructose 6-phosphate. The protein operates within carbohydrate degradation; glycolysis; D-glyceraldehyde 3-phosphate and glycerone phosphate from D-glucose: step 2/4. The polypeptide is Glucose-6-phosphate isomerase (GGI.R1) (Plasmodium falciparum).